Reading from the N-terminus, the 60-residue chain is Large ribosomal subunit protein uL30 (60 aa).

Belongs to the universal ribosomal protein uL30 family. As to quaternary structure, part of the 50S ribosomal subunit.

In Baumannia cicadellinicola subsp. Homalodisca coagulata, this protein is Large ribosomal subunit protein uL30.